Reading from the N-terminus, the 432-residue chain is Enolase (432 aa).

Glutamine 167 lines the (2R)-2-phosphoglycerate pocket. Glutamate 209 (proton donor) is an active-site residue. Mg(2+) is bound by residues aspartate 246, glutamate 290, and aspartate 317. 4 residues coordinate (2R)-2-phosphoglycerate: lysine 342, arginine 371, serine 372, and lysine 393. Lysine 342 (proton acceptor) is an active-site residue.

Belongs to the enolase family. Component of the RNA degradosome, a multiprotein complex involved in RNA processing and mRNA degradation. It depends on Mg(2+) as a cofactor.

It is found in the cytoplasm. The protein localises to the secreted. The protein resides in the cell surface. The catalysed reaction is (2R)-2-phosphoglycerate = phosphoenolpyruvate + H2O. It functions in the pathway carbohydrate degradation; glycolysis; pyruvate from D-glyceraldehyde 3-phosphate: step 4/5. Catalyzes the reversible conversion of 2-phosphoglycerate (2-PG) into phosphoenolpyruvate (PEP). It is essential for the degradation of carbohydrates via glycolysis. The protein is Enolase of Shigella sonnei (strain Ss046).